Consider the following 430-residue polypeptide: Histidinol dehydrogenase (430 aa).

Residues tyrosine 130, glutamine 191, and asparagine 214 each coordinate NAD(+). The substrate site is built by serine 237, glutamine 259, and histidine 262. Glutamine 259 and histidine 262 together coordinate Zn(2+). Active-site proton acceptor residues include glutamate 327 and histidine 328. Substrate is bound by residues histidine 328, aspartate 361, glutamate 415, and histidine 420. Residue aspartate 361 participates in Zn(2+) binding. Histidine 420 provides a ligand contact to Zn(2+).

The protein belongs to the histidinol dehydrogenase family. Requires Zn(2+) as cofactor.

The enzyme catalyses L-histidinol + 2 NAD(+) + H2O = L-histidine + 2 NADH + 3 H(+). It participates in amino-acid biosynthesis; L-histidine biosynthesis; L-histidine from 5-phospho-alpha-D-ribose 1-diphosphate: step 9/9. Functionally, catalyzes the sequential NAD-dependent oxidations of L-histidinol to L-histidinaldehyde and then to L-histidine. The sequence is that of Histidinol dehydrogenase from Brucella abortus (strain 2308).